Reading from the N-terminus, the 79-residue chain is Small proline-rich protein 4 (79 aa).

The segment covering 1-26 has biased composition (low complexity); the sequence is MSSQQQQRQQQQCPPQRAQQQQVKQP. The segment at 1–79 is disordered; sequence MSSQQQQRQQ…AQQASKSKQK (79 aa). Over residues 66–79 the composition is skewed to polar residues; the sequence is KCPSAQQASKSKQK.

This sequence belongs to the cornifin (SPRR) family. In terms of processing, cross-linked to membrane proteins by transglutaminase.

It is found in the cytoplasm. Its subcellular location is the cell cortex. Functionally, cross-linked envelope protein of keratinocytes. Involved in UV-induced cornification. In Homo sapiens (Human), this protein is Small proline-rich protein 4 (SPRR4).